Reading from the N-terminus, the 266-residue chain is Energy-coupling factor transporter ATP-binding protein EcfA1 (266 aa).

In terms of domain architecture, ABC transporter spans 2–237 (IKLNNVTFRY…EKIIEIAKIA (236 aa)). Residue 37-44 (GHNGSGKS) participates in ATP binding.

It belongs to the ABC transporter superfamily. Energy-coupling factor EcfA family. As to quaternary structure, forms a stable energy-coupling factor (ECF) transporter complex composed of 2 membrane-embedded substrate-binding proteins (S component), 2 ATP-binding proteins (A component) and 2 transmembrane proteins (T component).

It is found in the cell membrane. Functionally, ATP-binding (A) component of a common energy-coupling factor (ECF) ABC-transporter complex. Unlike classic ABC transporters this ECF transporter provides the energy necessary to transport a number of different substrates. This Mycoplasmopsis synoviae (strain 53) (Mycoplasma synoviae) protein is Energy-coupling factor transporter ATP-binding protein EcfA1.